The primary structure comprises 211 residues: Large ribosomal subunit protein uL3 (211 aa).

The protein belongs to the universal ribosomal protein uL3 family. Part of the 50S ribosomal subunit. Forms a cluster with proteins L14 and L19.

In terms of biological role, one of the primary rRNA binding proteins, it binds directly near the 3'-end of the 23S rRNA, where it nucleates assembly of the 50S subunit. This is Large ribosomal subunit protein uL3 from Geotalea daltonii (strain DSM 22248 / JCM 15807 / FRC-32) (Geobacter daltonii).